Consider the following 551-residue polypeptide: Glucans biosynthesis protein D (551 aa).

A signal peptide (tat-type signal) is located at residues 1-32 (MNRRRFLQGSLAMAALSGTTGLSTLFSRAAFA).

The protein belongs to the OpgD/OpgG family. Post-translationally, predicted to be exported by the Tat system. The position of the signal peptide cleavage has not been experimentally proven.

The protein resides in the periplasm. It functions in the pathway glycan metabolism; osmoregulated periplasmic glucan (OPG) biosynthesis. Probably involved in the control of the structural glucose backbone of osmoregulated periplasmic glucans (OPGs). The sequence is that of Glucans biosynthesis protein D from Enterobacter sp. (strain 638).